The following is a 342-amino-acid chain: Ferrochelatase (342 aa).

Histidine 188 and glutamate 268 together coordinate Fe cation.

Belongs to the ferrochelatase family.

The protein localises to the cytoplasm. It catalyses the reaction heme b + 2 H(+) = protoporphyrin IX + Fe(2+). Its pathway is porphyrin-containing compound metabolism; protoheme biosynthesis; protoheme from protoporphyrin-IX: step 1/1. In terms of biological role, catalyzes the ferrous insertion into protoporphyrin IX. This chain is Ferrochelatase, found in Rickettsia conorii (strain ATCC VR-613 / Malish 7).